The primary structure comprises 414 residues: Probable mannose-1-phosphate guanyltransferase (414 aa).

Belongs to the transferase hexapeptide repeat family.

It is found in the cytoplasm. It localises to the nucleus. The enzyme catalyses alpha-D-mannose 1-phosphate + GTP + H(+) = GDP-alpha-D-mannose + diphosphate. The protein operates within nucleotide-sugar biosynthesis; GDP-alpha-D-mannose biosynthesis; GDP-alpha-D-mannose from alpha-D-mannose 1-phosphate (GTP route): step 1/1. Involved in cell wall synthesis where it is required for glycosylation. This is Probable mannose-1-phosphate guanyltransferase from Schizosaccharomyces pombe (strain 972 / ATCC 24843) (Fission yeast).